Here is a 302-residue protein sequence, read N- to C-terminus: 4-hydroxy-tetrahydrodipicolinate synthase (302 aa).

Threonine 55 serves as a coordination point for pyruvate. Catalysis depends on tyrosine 144, which acts as the Proton donor/acceptor. The active-site Schiff-base intermediate with substrate is the lysine 172. Valine 214 serves as a coordination point for pyruvate.

This sequence belongs to the DapA family. Homotetramer; dimer of dimers.

It is found in the cytoplasm. It catalyses the reaction L-aspartate 4-semialdehyde + pyruvate = (2S,4S)-4-hydroxy-2,3,4,5-tetrahydrodipicolinate + H2O + H(+). The protein operates within amino-acid biosynthesis; L-lysine biosynthesis via DAP pathway; (S)-tetrahydrodipicolinate from L-aspartate: step 3/4. Its function is as follows. Catalyzes the condensation of (S)-aspartate-beta-semialdehyde [(S)-ASA] and pyruvate to 4-hydroxy-tetrahydrodipicolinate (HTPA). This is 4-hydroxy-tetrahydrodipicolinate synthase from Prochlorococcus marinus (strain MIT 9211).